The primary structure comprises 297 residues: 4,5-DOPA dioxygenase extradiol-like protein (297 aa).

The Zn(2+) site is built by histidine 30, histidine 82, histidine 205, and histidine 263.

This sequence belongs to the DODA-type extradiol aromatic ring-opening dioxygenase family. It depends on Zn(2+) as a cofactor.

The protein resides in the cytoplasm. It is found in the nucleus. In terms of biological role, may be involved in the metabolism of aromatic compounds. The sequence is that of 4,5-DOPA dioxygenase extradiol-like protein from Schizosaccharomyces pombe (strain 972 / ATCC 24843) (Fission yeast).